The sequence spans 169 residues: NAD(P)H-quinone oxidoreductase subunit J, chloroplastic (169 aa).

The protein belongs to the complex I 30 kDa subunit family. As to quaternary structure, NDH is composed of at least 16 different subunits, 5 of which are encoded in the nucleus.

The protein localises to the plastid. It localises to the chloroplast thylakoid membrane. It carries out the reaction a plastoquinone + NADH + (n+1) H(+)(in) = a plastoquinol + NAD(+) + n H(+)(out). The catalysed reaction is a plastoquinone + NADPH + (n+1) H(+)(in) = a plastoquinol + NADP(+) + n H(+)(out). Functionally, NDH shuttles electrons from NAD(P)H:plastoquinone, via FMN and iron-sulfur (Fe-S) centers, to quinones in the photosynthetic chain and possibly in a chloroplast respiratory chain. The immediate electron acceptor for the enzyme in this species is believed to be plastoquinone. Couples the redox reaction to proton translocation, and thus conserves the redox energy in a proton gradient. The polypeptide is NAD(P)H-quinone oxidoreductase subunit J, chloroplastic (Marchantia polymorpha (Common liverwort)).